Consider the following 646-residue polypeptide: RNase E specificity factor CsrD (646 aa).

Transmembrane regions (helical) follow at residues 10 to 30 and 135 to 155; these read FVTL…SLSF and MTTA…FLAV. Residues 152–219 are HAMP-like; it reads FLAVRWLQRQ…REQHSRLDTL (68 aa). Residues 194–224 are a coiled coil; it reads RTSSALDTLLREIQNAREQHSRLDTLIRSYA. Residues 254–387 form the GGDEF domain; that stretch reads THGIVMMIRL…GGNSWAIYDD (134 aa). Residues 396–644 enclose the EAL domain; sequence NVRWRTLIEQ…TNVKKYSQRY (249 aa).

It is found in the cell membrane. Functionally, serves as a specificity factor required for RNase E-mediated decay of the small global regulatory RNAs CsrB and CsrC, it is probably not a nuclease. Nor does its activity involve c-di-GMP, despite its domain composition. Positively modulates motility gene expression, is also required for curli expression. This chain is RNase E specificity factor CsrD (csrD), found in Escherichia coli (strain K12).